Reading from the N-terminus, the 476-residue chain is UDP-N-acetylmuramate--L-alanine ligase (476 aa).

Gly-123 to Thr-129 contacts ATP.

It belongs to the MurCDEF family.

The protein resides in the cytoplasm. The catalysed reaction is UDP-N-acetyl-alpha-D-muramate + L-alanine + ATP = UDP-N-acetyl-alpha-D-muramoyl-L-alanine + ADP + phosphate + H(+). It participates in cell wall biogenesis; peptidoglycan biosynthesis. In terms of biological role, cell wall formation. The protein is UDP-N-acetylmuramate--L-alanine ligase of Nitrosococcus oceani (strain ATCC 19707 / BCRC 17464 / JCM 30415 / NCIMB 11848 / C-107).